We begin with the raw amino-acid sequence, 471 residues long: UDP-N-acetylmuramoylalanine--D-glutamate ligase (471 aa).

ATP is bound at residue 123–129 (GTNGKST).

This sequence belongs to the MurCDEF family.

The protein localises to the cytoplasm. The catalysed reaction is UDP-N-acetyl-alpha-D-muramoyl-L-alanine + D-glutamate + ATP = UDP-N-acetyl-alpha-D-muramoyl-L-alanyl-D-glutamate + ADP + phosphate + H(+). It functions in the pathway cell wall biogenesis; peptidoglycan biosynthesis. Cell wall formation. Catalyzes the addition of glutamate to the nucleotide precursor UDP-N-acetylmuramoyl-L-alanine (UMA). The chain is UDP-N-acetylmuramoylalanine--D-glutamate ligase from Caulobacter vibrioides (strain ATCC 19089 / CIP 103742 / CB 15) (Caulobacter crescentus).